We begin with the raw amino-acid sequence, 293 residues long: Pyridoxal 5'-phosphate synthase subunit PdxS (293 aa).

D23 provides a ligand contact to D-ribose 5-phosphate. K80 serves as the catalytic Schiff-base intermediate with D-ribose 5-phosphate. G152 provides a ligand contact to D-ribose 5-phosphate. R164 is a binding site for D-glyceraldehyde 3-phosphate. Residues G213 and 234–235 (GS) contribute to the D-ribose 5-phosphate site.

The protein belongs to the PdxS/SNZ family. As to quaternary structure, in the presence of PdxT, forms a dodecamer of heterodimers.

It carries out the reaction aldehydo-D-ribose 5-phosphate + D-glyceraldehyde 3-phosphate + L-glutamine = pyridoxal 5'-phosphate + L-glutamate + phosphate + 3 H2O + H(+). It functions in the pathway cofactor biosynthesis; pyridoxal 5'-phosphate biosynthesis. In terms of biological role, catalyzes the formation of pyridoxal 5'-phosphate from ribose 5-phosphate (RBP), glyceraldehyde 3-phosphate (G3P) and ammonia. The ammonia is provided by the PdxT subunit. Can also use ribulose 5-phosphate and dihydroxyacetone phosphate as substrates, resulting from enzyme-catalyzed isomerization of RBP and G3P, respectively. This is Pyridoxal 5'-phosphate synthase subunit PdxS from Roseiflexus castenholzii (strain DSM 13941 / HLO8).